Here is a 27-residue protein sequence, read N- to C-terminus: Caerulein precursor fragment R7 (27 aa).

Expressed by the skin glands.

The protein resides in the secreted. Its function is as follows. Antimicrobial peptide. The protein is Caerulein precursor fragment R7 of Xenopus ruwenzoriensis (Uganda clawed frog).